A 988-amino-acid polypeptide reads, in one-letter code: Voltage-gated delayed rectifier potassium channel KCNH5 (988 aa).

The Cytoplasmic portion of the chain corresponds to 1 to 217; the sequence is MPGGKRGLVA…LHYCAFKTTW (217 aa). One can recognise a PAS domain in the interval 14–86; the sequence is TFLENIVRRS…TIEKVRQTFD (73 aa). Residues 91 to 143 enclose the PAC domain; the sequence is NCFEVLLYKKNRTPVWFYMQIAPIRNEHEKVVLFLCTFKDITLFKQPIEDDST. Residues 218 to 238 traverse the membrane as a helical segment; that stretch reads DWVILILTFYTAIMVPYNVSF. Topologically, residues 239-243 are extracellular; sequence KTKQN. The chain crosses the membrane as a helical span at residues 244 to 264; the sequence is NIAWLVLDSVVDVIFLVDIVL. The Cytoplasmic portion of the chain corresponds to 265 to 291; sequence NFHTTFVGPGGEVISDPKLIRMNYLKT. A helical transmembrane segment spans residues 292 to 312; the sequence is WFVIDLLSCLPYDIINAFENV. Over 313–319 the chain is Extracellular; that stretch reads DEGISSL. A helical; Voltage-sensor transmembrane segment spans residues 320–340; that stretch reads FSSLKVVRLLRLGRVARKLDH. Residues 341 to 346 lie on the Cytoplasmic side of the membrane; the sequence is YLEYGA. A helical membrane pass occupies residues 347–367; it reads AVLVLLVCVFGLVAHWLACIW. The Extracellular portion of the chain corresponds to 368-419; it reads YSIGDYEVIDEVTNTIQIDSWLYQLALSIGTPYRYNTSAGIWEGGPSKDSLY. The N-linked (GlcNAc...) asparagine glycan is linked to Asn-403. The pore-forming intramembrane region spans 420–440; that stretch reads VSSLYFTMTSLTTIGFGNIAP. The Selectivity filter motif lies at 432–437; it reads TIGFGN. Over 441–446 the chain is Extracellular; that stretch reads TTDVEK. The helical transmembrane segment at 447–467 threads the bilayer; the sequence is MFSVAMMMVGSLLYATIFGNV. Topologically, residues 468 to 988 are cytoplasmic; sequence TTIFQQMYAN…PESDKDEINF (521 aa). A nucleoside 3',5'-cyclic phosphate is bound at residue 550–667; sequence AFRLASDGCL…NSFSRNLTLT (118 aa). The interval 704–715 is calmodulin-binding; that stretch reads HPVRKLFQKFKQ. Residues 718-742 form a disordered region; sequence ELRNQGSAQSDPERSQLQVESRPLQ. Residues 721–742 are compositionally biased toward polar residues; that stretch reads NQGSAQSDPERSQLQVESRPLQ. Lys-785 participates in a covalent cross-link: Glycyl lysine isopeptide (Lys-Gly) (interchain with G-Cter in ubiquitin). Disordered regions lie at residues 839–897 and 946–965; these read LLSE…AKHP and SVPQ…PPQI. Basic and acidic residues predominate over residues 871-885; sequence SDLRLDKAGEARSPL. A Phosphoserine modification is found at Ser-883. Residues 909–948 are CAD (involved in subunit assembly); the sequence is TLQEVKHELKEDIQLLSCRMTALEKQVAEILKLLSEKSVP.

It belongs to the potassium channel family. H (Eag) (TC 1.A.1.20) subfamily. Kv10.2/KCNH5 sub-subfamily. Homotetramer. The potassium channel is probably composed of a homo- or heterotetrameric complex of pore-forming alpha subunits that can associate with modulating beta subunits. Heteromultimer with KCNH1/EAG. Detected in adult testis and in embryonic and adult brain, but not in other tissues. Highly expressed in specific brain areas, such as neocortex, olfactory bulb, primary olfactory cortex and brain stem. In cortex, expression is concentrated in a narrow band toward the middle lamella (layer IV). Moderately expressed in spinal cord, dorsal thalamic nuclei, medial hypothalamus, colliculus, lateral lemniscus, pontine nuclei and Islands of Calleja.

The protein resides in the membrane. The catalysed reaction is K(+)(in) = K(+)(out). Inhibited by low nanomolar concentrations of cytosolic calcium. In terms of biological role, pore-forming (alpha) subunit of a voltage-gated delayed rectifier potassium channel that mediates outward-rectifying potassium currents which, on depolarization, reaches a steady-state level and do not inactivate. The kinetic is characterized by a slow activation time course and a small voltage dependence of the activation time constants, therefore, starts to open at more negative voltages. The activation kinetics depend on the prepulse potential and external divalent cation concentration. The time course of activation is biphasic with a fast and a slowly activating current component. With negative prepulses, the current activation is delayed and slowed down several fold, whereas more positive prepulses speed up activation, therefore the activation rate depends on holding potential. This is Voltage-gated delayed rectifier potassium channel KCNH5 from Rattus norvegicus (Rat).